Here is a 438-residue protein sequence, read N- to C-terminus: Glutamate-1-semialdehyde 2,1-aminomutase (438 aa).

At Lys-278 the chain carries N6-(pyridoxal phosphate)lysine.

The protein belongs to the class-III pyridoxal-phosphate-dependent aminotransferase family. HemL subfamily. In terms of assembly, homodimer. The cofactor is pyridoxal 5'-phosphate.

Its subcellular location is the cytoplasm. It carries out the reaction (S)-4-amino-5-oxopentanoate = 5-aminolevulinate. It functions in the pathway porphyrin-containing compound metabolism; protoporphyrin-IX biosynthesis; 5-aminolevulinate from L-glutamyl-tRNA(Glu): step 2/2. This chain is Glutamate-1-semialdehyde 2,1-aminomutase, found in Delftia acidovorans (strain DSM 14801 / SPH-1).